The following is a 959-amino-acid chain: Ribonucleoside-diphosphate reductase large subunit (959 aa).

Residues Thr68, 83 to 84 (SC), and Gly112 each bind substrate. An intrachain disulfide couples Cys84 to Cys626. Residue Asn270 is the Proton acceptor of the active site. The region spanning 378–508 (LPTLFGNSEH…IQLLLIGMGV (131 aa)) is the DOD-type homing endonuclease domain. Cys611 acts as the Cysteine radical intermediate in catalysis. Glu613 functions as the Proton acceptor in the catalytic mechanism. Residue 751–755 (PTATS) coordinates substrate.

It belongs to the ribonucleoside diphosphate reductase large chain family. Heterotetramer composed of a homodimer of the large subunit (R1) and a homodimer of the small subunit (R2). Larger multisubunit protein complex are also active, composed of (R1)n(R2)n.

The enzyme catalyses a 2'-deoxyribonucleoside 5'-diphosphate + [thioredoxin]-disulfide + H2O = a ribonucleoside 5'-diphosphate + [thioredoxin]-dithiol. Its activity is regulated as follows. Under complex allosteric control mediated by deoxynucleoside triphosphates and ATP binding. The type of nucleotide bound at the specificity site determines substrate preference. It seems probable that ATP makes the enzyme reduce CDP and UDP, dGTP favors ADP reduction and dTTP favors GDP reduction. In terms of biological role, ribonucleoside-diphosphate reductase holoenzyme provides the precursors necessary for viral DNA synthesis. Allows virus growth in non-dividing cells. Catalyzes the biosynthesis of deoxyribonucleotides from the corresponding ribonucleotides. This is Ribonucleoside-diphosphate reductase large subunit from Acheta domesticus (House cricket).